Here is a 433-residue protein sequence, read N- to C-terminus: Probable dipeptidase (433 aa).

C20 is a catalytic residue.

This sequence belongs to the peptidase C69 family.

The catalysed reaction is an L-aminoacyl-L-amino acid + H2O = 2 an L-alpha-amino acid. In Salmonella dublin, this protein is Probable dipeptidase (pipD).